The chain runs to 807 residues: Glycerol-3-phosphate acyltransferase (807 aa).

The short motif at Cys-308–Met-313 is the HXXXXD motif element.

The protein belongs to the GPAT/DAPAT family.

It localises to the cell inner membrane. The enzyme catalyses sn-glycerol 3-phosphate + an acyl-CoA = a 1-acyl-sn-glycero-3-phosphate + CoA. It functions in the pathway phospholipid metabolism; CDP-diacylglycerol biosynthesis; CDP-diacylglycerol from sn-glycerol 3-phosphate: step 1/3. The chain is Glycerol-3-phosphate acyltransferase from Shewanella frigidimarina (strain NCIMB 400).